The primary structure comprises 208 residues: Glutathione S-transferase F6 (208 aa).

In terms of domain architecture, GST N-terminal spans 2–83 (AGIKVFGHPA…YIAHEFSDKG (82 aa)). Residues 12-13 (ST), 41-42 (HK), 54-55 (KV), and 67-68 (ES) contribute to the glutathione site. The GST C-terminal domain occupies 89 to 208 (TGKDMAIIAM…TSRPSAQKVL (120 aa)).

Belongs to the GST superfamily. Phi family.

Its subcellular location is the cytoplasm. The protein localises to the cytosol. The enzyme catalyses RX + glutathione = an S-substituted glutathione + a halide anion + H(+). Functionally, involved in camalexin biosynthesis by probably catalyzing the conjugation of GSH with indole-3-acetonitrile (IAN). May be involved in the conjugation of reduced glutathione to a wide number of exogenous and endogenous hydrophobic electrophiles and have a detoxification role against certain herbicides. In Arabidopsis thaliana (Mouse-ear cress), this protein is Glutathione S-transferase F6 (GSTF6).